The sequence spans 208 residues: Fibroblast growth factor 10 (208 aa).

The signal sequence occupies residues 1 to 37 (MWKWILTHCASAFPHLPGCCCCCFLLLFLVSSVPVTC). Asparagine 51 and asparagine 196 each carry an N-linked (GlcNAc...) asparagine glycan.

This sequence belongs to the heparin-binding growth factors family. In terms of assembly, interacts with FGFR1 and FGFR2. Interacts with FGFBP1.

The protein localises to the secreted. Plays an important role in the regulation of embryonic development, cell proliferation and cell differentiation. Required for normal branching morphogenesis. May play a role in wound healing. The chain is Fibroblast growth factor 10 (FGF10) from Homo sapiens (Human).